We begin with the raw amino-acid sequence, 554 residues long: Solute carrier family 22 member 1 (554 aa).

The Cytoplasmic portion of the chain corresponds to 1 to 21; it reads MPTVDDILEQVGESGWFQKQA. Residues 22–42 form a helical membrane-spanning segment; sequence FLILCLLSAAFAPICVGIVFL. The Extracellular segment spans residues 43–149; the sequence is GFTPDHHCQS…LVCADSWKLD (107 aa). Residue asparagine 71 is glycosylated (N-linked (GlcNAc...) asparagine). The chain crosses the membrane as a helical span at residues 150–170; it reads LFQSCLNAGFLFGSLGVGYFA. At 171–176 the chain is on the cytoplasmic side; it reads DRFGRK. Residues 177 to 197 form a helical membrane-spanning segment; it reads LCLLGTVLVNAVSGVLMAFSP. Topologically, residues 198-206 are extracellular; that stretch reads NYMSMLLFR. A helical membrane pass occupies residues 207-229; that stretch reads LLQGLVSKGNWMAGYTLITEFVG. Topologically, residues 230–235 are cytoplasmic; the sequence is SGSRRT. A helical transmembrane segment spans residues 236-256; that stretch reads VAIMYQMAFTVGLVALTGLAY. The Extracellular segment spans residues 257–262; it reads ALPHWR. Residues 263-283 form a helical membrane-spanning segment; sequence WLQLAVSLPTFLFLLYYWCVP. Residues 283–287 carry the Proline-rich sequence motif; that stretch reads PESPR. At 284-347 the chain is on the cytoplasmic side; it reads ESPRWLLSQK…FRTPRLRKRT (64 aa). Serine 333 is modified (phosphoserine). Residues 348-368 form a helical membrane-spanning segment; it reads FILMYLWFTDSVLYQGLILHM. Residues 369–376 are Extracellular-facing; the sequence is GATSGNLY. A helical membrane pass occupies residues 377-397; it reads LDFLYSALVEIPGAFIALITI. The Cytoplasmic segment spans residues 398 to 402; that stretch reads DRVGR. A helical membrane pass occupies residues 403-423; it reads IYPMAMSNLLAGAACLVMIFI. Residues 424 to 431 are Extracellular-facing; it reads SPDLHWLN. Residues 432–452 form a helical membrane-spanning segment; that stretch reads IIIMCVGRMGITIAIQMICLV. Residues 453-464 lie on the Cytoplasmic side of the membrane; the sequence is NAELYPTFVRNL. Residues 465 to 485 traverse the membrane as a helical segment; it reads GVMVCSSLCDIGGIITPFIVF. The Extracellular portion of the chain corresponds to 486–492; that stretch reads RLREVWQ. Residues 493 to 513 form a helical membrane-spanning segment; that stretch reads ALPLILFAVLGLLAAGVTLLL. Residues 514–554 are Cytoplasmic-facing; that stretch reads PETKGVALPETMKDAENLGRKAKPKENTIYLKVQTSEPSGT. Phosphothreonine is present on threonine 541.

The protein belongs to the major facilitator (TC 2.A.1) superfamily. Organic cation transporter (TC 2.A.1.19) family. In terms of processing, phosphorylated. As to expression, widely expressed with high level in liver. In liver, expressed around the central vein. Expressed in kidney. Expressed in small intestine enterocytes. Localized to peritubular myoid cells, Leydig cells and moderately to the basal membrane of Sertoli cells in testes. Expressed in tracheal and bronchial ciliated epithelium in the respiratory tract. Also expressed in skeletal muscle, stomach, spleen, heart, placentacolon, brain, granulycytes and lympohocytes. Expressed in liver and in glial cell lines. In terms of tissue distribution, expressed in glial cell lines. Not expressed in liver.

The protein localises to the basolateral cell membrane. The protein resides in the apical cell membrane. It localises to the lateral cell membrane. Its subcellular location is the basal cell membrane. It is found in the cell membrane. The enzyme catalyses 1-methylnicotinamide(out) = 1-methylnicotinamide(in). It carries out the reaction dopamine(out) = dopamine(in). The catalysed reaction is serotonin(out) = serotonin(in). It catalyses the reaction (R)-adrenaline(out) = (R)-adrenaline(in). The enzyme catalyses histamine(out) = histamine(in). It carries out the reaction guanidine(out) = guanidine(in). The catalysed reaction is acetylcholine(in) = acetylcholine(out). It catalyses the reaction thiamine(in) = thiamine(out). The enzyme catalyses agmatine(out) = agmatine(in). It carries out the reaction putrescine(out) = putrescine(in). The catalysed reaction is spermidine(in) = spermidine(out). It catalyses the reaction L-histidyl-L-proline diketopiperazine(in) = L-histidyl-L-proline diketopiperazine(out). The enzyme catalyses (R)-salsolinol(in) = (R)-salsolinol(out). It carries out the reaction prostaglandin F2alpha(out) = prostaglandin F2alpha(in). The catalysed reaction is prostaglandin E2(out) = prostaglandin E2(in). Phosphorylation of the transporter leads to changes in its substrate affinity, resulting in a regulation of the transport activity. In contrast with rat ortholog, ASP uptake is inhibited by protein kinase A (PKA) and C (PKC) activation. ASP uptake is also endogenously activated by calmodulin, the calmodulin-dependent kinase II and LCK tyrosine kinase. Inhibited by cGMP, most likely through a cGMP-binding protein that interacts with OCT1. In terms of biological role, electrogenic voltage-dependent transporter that mediates the transport of a variety of organic cations such as endogenous bioactive amines, cationic drugs and xenobiotics. Functions as a pH- and Na(+)-independent, bidirectional transporter. Cation cellular uptake or release is driven by the electrochemical potential (i.e. membrane potential and concentration gradient) and substrate selectivity. Hydrophobicity is a major requirement for recognition in polyvalent substrates and inhibitors. Primarily expressed at the basolateral membrane of hepatocytes and proximal tubules and involved in the uptake and disposition of cationic compounds by hepatic and renal clearance from the blood flow. Most likely functions as an uptake carrier in enterocytes contributing to the intestinal elimination of organic cations from the systemic circulation. Transports endogenous monoamines such as N-1-methylnicotinamide (NMN), guanidine, histamine, neurotransmitters dopamine, serotonin and adrenaline. Also transports natural polyamines such as spermidine, agmatine and putrescine at low affinity, but relatively high turnover. Involved in the hepatic uptake of vitamin B1/thiamine, hence regulating hepatic lipid and energy metabolism. Mediates the bidirectional transport of acetylcholine (ACh) at the apical membrane of ciliated cell in airway epithelium, thereby playing a role in luminal release of ACh from bronchial epithelium. Transports dopaminergic neuromodulators cyclo(his-pro) and salsolinol with lower efficency. Also capable of transporting non-amine endogenous compounds such as prostaglandin E2 (PGE2) and prostaglandin F2-alpha (PGF2-alpha). May contribute to the transport of cationic compounds in testes across the blood-testis-barrier. Also involved in the uptake of xenobiotics tributylmethylammonium (TBuMA), quinidine, N-methyl-quinine (NMQ), N-methyl-quinidine (NMQD) N-(4,4-azo-n-pentyl)-quinuclidine (APQ), azidoprocainamide methoiodide (AMP), N-(4,4-azo-n-pentyl)-21-deoxyajmalinium (APDA) and 4-(4-(dimethylamino)styryl)-N-methylpyridinium (ASP). Its function is as follows. Mediates the uptake of 1-methyl-4-phenylpyridinium (MPP(+)). Not able to uptake 1-methyl-4-phenylpyridinium (MPP(+)). The sequence is that of Solute carrier family 22 member 1 from Homo sapiens (Human).